A 920-amino-acid polypeptide reads, in one-letter code: Isoleucine--tRNA ligase (920 aa).

The short motif at 57–67 (PYANGDIHLGH) is the 'HIGH' region element. Glu-560 is a binding site for L-isoleucyl-5'-AMP. Residues 601-605 (KMSKS) carry the 'KMSKS' region motif. Residue Lys-604 participates in ATP binding. Positions 890, 893, 910, and 913 each coordinate Zn(2+).

This sequence belongs to the class-I aminoacyl-tRNA synthetase family. IleS type 1 subfamily. As to quaternary structure, monomer. It depends on Zn(2+) as a cofactor.

It is found in the cytoplasm. The enzyme catalyses tRNA(Ile) + L-isoleucine + ATP = L-isoleucyl-tRNA(Ile) + AMP + diphosphate. In terms of biological role, catalyzes the attachment of isoleucine to tRNA(Ile). As IleRS can inadvertently accommodate and process structurally similar amino acids such as valine, to avoid such errors it has two additional distinct tRNA(Ile)-dependent editing activities. One activity is designated as 'pretransfer' editing and involves the hydrolysis of activated Val-AMP. The other activity is designated 'posttransfer' editing and involves deacylation of mischarged Val-tRNA(Ile). The protein is Isoleucine--tRNA ligase of Caldicellulosiruptor bescii (strain ATCC BAA-1888 / DSM 6725 / KCTC 15123 / Z-1320) (Anaerocellum thermophilum).